Consider the following 505-residue polypeptide: Surface lipoprotein assembly modifier 2 (505 aa).

The signal sequence occupies residues 1 to 19; that stretch reads MLYFRYGFLVVWCAAGVSA. Residues 23–188 form an N-terminal domain region; that stretch reads ADAPAILDDK…RFRKKTEGLT (166 aa). The tract at residues 189–505 is C-terminal probable beta barrel; that stretch reads GWRFSGGISP…EVFVSADWRF (317 aa). A run of 14 beta stranded transmembrane segments spans residues 190-200, 232-243, 248-258, 273-283, 287-297, 326-335, 340-350, 368-377, 381-391, 411-420, 427-437, 456-465, 472-482, and 495-505; these read WRFSGGISPAV, LNYEIEAEKLTP, HYLLFRSNIGG, FGRAYLGWQYK, QTAGILPFYQV, VGVQLSHTYR, WQFSVALEHYR, GFYVSSAKRL, ATVFGGWQFVR, NGVYAGWAQE, LNSRVSASYAR, WNVSLALSHD, IVPALNYRFGR, and SEVFVSADWRF.

Belongs to the Slam family.

It is found in the cell outer membrane. Its function is as follows. Required for correct export to the cell surface of cell outer membrane lipoprotein HpuA heterologously in E.coli (hpuA does not exist in N.meningitidis strain MC58). The sequence is that of Surface lipoprotein assembly modifier 2 from Neisseria meningitidis serogroup B (strain ATCC BAA-335 / MC58).